We begin with the raw amino-acid sequence, 135 residues long: MSRTVILTRREVFSSSHRLYSDKLSLEENKKIYGKCINSHGHNYVLEVSIKGAVKEDIGMFMNITELKEILKEKVMDKLDHKNLENDVPELKGIVTTTENLSIFIWDQLFPSLKDFLYEVKILETENNFVVYRGE.

His-17 contributes to the Zn(2+) binding site. The active-site Proton acceptor is the Cys-36. His-40 and His-42 together coordinate Zn(2+). Residues His-81 and Glu-124 each act as charge relay system in the active site.

The protein belongs to the PTPS family. In terms of assembly, homohexamer formed of two homotrimers in a head to head fashion. Requires Zn(2+) as cofactor.

The enzyme catalyses 7,8-dihydroneopterin 3'-triphosphate = 6-pyruvoyl-5,6,7,8-tetrahydropterin + triphosphate + H(+). It participates in cofactor biosynthesis; tetrahydrobiopterin biosynthesis; tetrahydrobiopterin from 7,8-dihydroneopterin triphosphate: step 1/3. Functionally, involved in the biosynthesis of tetrahydrobiopterin, an essential cofactor of aromatic amino acid hydroxylases. Catalyzes the transformation of 7,8-dihydroneopterin triphosphate into 6-pyruvoyl tetrahydropterin. This is 6-pyruvoyl tetrahydrobiopterin synthase (ptsA) from Dictyostelium discoideum (Social amoeba).